The sequence spans 345 residues: Anthranilate phosphoribosyltransferase (345 aa).

Residues G84, 87–88 (GD), T92, 94–97 (NIST), 112–120 (KHGNRSVSS), and S124 contribute to the 5-phospho-alpha-D-ribose 1-diphosphate site. An anthranilate-binding site is contributed by G84. S96 provides a ligand contact to Mg(2+). Residue N115 participates in anthranilate binding. Residue R170 participates in anthranilate binding. The Mg(2+) site is built by D229 and E230.

Belongs to the anthranilate phosphoribosyltransferase family. In terms of assembly, homodimer. Mg(2+) serves as cofactor.

The enzyme catalyses N-(5-phospho-beta-D-ribosyl)anthranilate + diphosphate = 5-phospho-alpha-D-ribose 1-diphosphate + anthranilate. Its pathway is amino-acid biosynthesis; L-tryptophan biosynthesis; L-tryptophan from chorismate: step 2/5. Catalyzes the transfer of the phosphoribosyl group of 5-phosphorylribose-1-pyrophosphate (PRPP) to anthranilate to yield N-(5'-phosphoribosyl)-anthranilate (PRA). This chain is Anthranilate phosphoribosyltransferase, found in Xanthomonas campestris pv. campestris (strain 8004).